We begin with the raw amino-acid sequence, 155 residues long: Large ribosomal subunit protein bL17 (155 aa).

Belongs to the bacterial ribosomal protein bL17 family. Part of the 50S ribosomal subunit. Contacts protein L32.

This is Large ribosomal subunit protein bL17 from Bifidobacterium adolescentis (strain ATCC 15703 / DSM 20083 / NCTC 11814 / E194a).